We begin with the raw amino-acid sequence, 220 residues long: Cell division protein SepF (220 aa).

A disordered region spans residues 1 to 120 (MAIKDAFNKM…RREQYQHAAH (120 aa)). The span at 26-35 (LSSKKQEEPV) shows a compositional bias: basic and acidic residues. Positions 39-79 (QQTSRPNQQQQAARASQPQQPKQARPQMQAQQRPQSQSRAA) are enriched in low complexity. A compositionally biased stretch (basic and acidic residues) spans 93–102 (VSHDYNDRRA).

This sequence belongs to the SepF family. As to quaternary structure, homodimer. Interacts with FtsZ.

It is found in the cytoplasm. Its function is as follows. Cell division protein that is part of the divisome complex and is recruited early to the Z-ring. Probably stimulates Z-ring formation, perhaps through the cross-linking of FtsZ protofilaments. Its function overlaps with FtsA. In Streptococcus equi subsp. equi (strain 4047), this protein is Cell division protein SepF.